Consider the following 241-residue polypeptide: Putative integrase ORF241 (241 aa).

Residues 82 to 241 form the Tyr recombinase domain; the sequence is VEAKKTLVSA…AIEMLRKLAD (160 aa). Catalysis depends on residues Arg119, Lys144, His191, Arg194, and His217. The active-site O-(3'-phospho-DNA)-tyrosine intermediate is the Tyr226.

It belongs to the 'phage' integrase family.

This protein may encode an integrase, which is necessary for integration of the viral DNA into host genome. The protein is Putative integrase ORF241 of Acidianus convivator (ATV).